The primary structure comprises 269 residues: MTSSTAARQLGFEPFASTAPTELRASSDVIHAAYRQVFQVFGNDHVMQSERLTSAESLLQQGNISVRDFVRLLAQSELYRQKFFYSTPQVRFIELNYKHLLGRAPYDESEISYHVNLYTEKGYEAEINSYIDSAEYQESFGERIVPHYRGFETQPGQKTVGFNRMFQIYRGYANSDRSQGKNKSAWLTQDLALNLASNIQTPNFGKGLTGVVAGDRGQLYRVRVIQADRGRTTQIRRSIQEYLVSYDQLSPTLQRLNQRGSRVVNISPA.

Positions 2–177 (TSSTAARQLG…IYRGYANSDR (176 aa)) constitute a PBS-linker domain. The CpcD-like domain maps to 217–269 (GQLYRVRVIQADRGRTTQIRRSIQEYLVSYDQLSPTLQRLNQRGSRVVNISPA).

The protein belongs to the phycobilisome linker protein family.

It localises to the cellular thylakoid membrane. Its function is as follows. Rod linker protein, associated with phycocyanin. Linker polypeptides determine the state of aggregation and the location of the disk-shaped phycobiliprotein units within the phycobilisome and modulate their spectroscopic properties in order to mediate a directed and optimal energy transfer. This is Phycobilisome 37.5 kDa linker polypeptide, phycocyanin-associated, rod (cpcH2) from Microchaete diplosiphon (Fremyella diplosiphon).